A 381-amino-acid chain; its full sequence is Protein COS8 (381 aa).

Topologically, residues 1–42 are extracellular; the sequence is MKENEVKDEKSVDVLSFKQLEFQKTVLPQDVFRNELTWFCYE. Residues 43–63 form a helical membrane-spanning segment; the sequence is IYKSLAFRIWMLLWLPLSVWW. The Cytoplasmic segment spans residues 64 to 72; that stretch reads KLSSNWIHP. A helical membrane pass occupies residues 73–93; it reads LIVSLLVLFLGPFFVLVICGL. Residues 94–237 are Extracellular-facing; sequence SRKRSLSKQL…WILKRIFNLR (144 aa). A helical transmembrane segment spans residues 238–258; the sequence is CLPLFLYYFLIVYTSGNADLI. Residues 259 to 381 are Cytoplasmic-facing; that stretch reads SRFLFPVVMF…QSARNEKPLK (123 aa).

This sequence belongs to the DUP/COS family.

It localises to the membrane. The chain is Protein COS8 (COS8) from Saccharomyces cerevisiae (strain ATCC 204508 / S288c) (Baker's yeast).